A 246-amino-acid chain; its full sequence is Adenosylcobinamide-GDP ribazoletransferase (246 aa).

The next 7 membrane-spanning stretches (helical) occupy residues 30 to 50 (VNWY…VHQA), 51 to 71 (GLVL…WVYV), 105 to 125 (VGAM…GAVA), 131 to 151 (GWGS…LLSI), 167 to 189 (ISSG…AGWY), 193 to 210 (LQVM…LWFS), and 226 to 246 (GAVI…SWWL).

It belongs to the CobS family. Mg(2+) serves as cofactor.

It is found in the cell membrane. The enzyme catalyses alpha-ribazole + adenosylcob(III)inamide-GDP = adenosylcob(III)alamin + GMP + H(+). It catalyses the reaction alpha-ribazole 5'-phosphate + adenosylcob(III)inamide-GDP = adenosylcob(III)alamin 5'-phosphate + GMP + H(+). It functions in the pathway cofactor biosynthesis; adenosylcobalamin biosynthesis; adenosylcobalamin from cob(II)yrinate a,c-diamide: step 7/7. Joins adenosylcobinamide-GDP and alpha-ribazole to generate adenosylcobalamin (Ado-cobalamin). Also synthesizes adenosylcobalamin 5'-phosphate from adenosylcobinamide-GDP and alpha-ribazole 5'-phosphate. The polypeptide is Adenosylcobinamide-GDP ribazoletransferase (Brevibacillus brevis (strain 47 / JCM 6285 / NBRC 100599)).